A 308-amino-acid chain; its full sequence is Ribonuclease Z (308 aa).

Zn(2+)-binding residues include histidine 63, histidine 65, aspartate 67, histidine 68, histidine 141, aspartate 212, and histidine 270. Aspartate 67 serves as the catalytic Proton acceptor.

The protein belongs to the RNase Z family. Homodimer. The cofactor is Zn(2+).

It carries out the reaction Endonucleolytic cleavage of RNA, removing extra 3' nucleotides from tRNA precursor, generating 3' termini of tRNAs. A 3'-hydroxy group is left at the tRNA terminus and a 5'-phosphoryl group is left at the trailer molecule.. Its function is as follows. Zinc phosphodiesterase, which displays some tRNA 3'-processing endonuclease activity. Probably involved in tRNA maturation, by removing a 3'-trailer from precursor tRNA. The polypeptide is Ribonuclease Z (Pediococcus pentosaceus (strain ATCC 25745 / CCUG 21536 / LMG 10740 / 183-1w)).